The chain runs to 445 residues: Phosphoglucosamine mutase 1 (445 aa).

The active-site Phosphoserine intermediate is the Ser102. The Mg(2+) site is built by Ser102, Asp241, Asp243, and Asp245. A Phosphoserine modification is found at Ser102.

This sequence belongs to the phosphohexose mutase family. Mg(2+) serves as cofactor. Activated by phosphorylation.

It carries out the reaction alpha-D-glucosamine 1-phosphate = D-glucosamine 6-phosphate. Catalyzes the conversion of glucosamine-6-phosphate to glucosamine-1-phosphate. In Shewanella baltica (strain OS185), this protein is Phosphoglucosamine mutase 1.